The following is a 243-amino-acid chain: Pyridoxine 5'-phosphate synthase (243 aa).

Residue asparagine 9 participates in 3-amino-2-oxopropyl phosphate binding. 11–12 (DH) serves as a coordination point for 1-deoxy-D-xylulose 5-phosphate. Arginine 20 lines the 3-amino-2-oxopropyl phosphate pocket. Histidine 45 (proton acceptor) is an active-site residue. The 1-deoxy-D-xylulose 5-phosphate site is built by arginine 47 and histidine 52. Glutamate 72 functions as the Proton acceptor in the catalytic mechanism. Threonine 102 is a 1-deoxy-D-xylulose 5-phosphate binding site. Residue histidine 193 is the Proton donor of the active site. 3-amino-2-oxopropyl phosphate contacts are provided by residues glycine 194 and 215–216 (GH).

Belongs to the PNP synthase family. As to quaternary structure, homooctamer; tetramer of dimers.

The protein localises to the cytoplasm. The enzyme catalyses 3-amino-2-oxopropyl phosphate + 1-deoxy-D-xylulose 5-phosphate = pyridoxine 5'-phosphate + phosphate + 2 H2O + H(+). It participates in cofactor biosynthesis; pyridoxine 5'-phosphate biosynthesis; pyridoxine 5'-phosphate from D-erythrose 4-phosphate: step 5/5. In terms of biological role, catalyzes the complicated ring closure reaction between the two acyclic compounds 1-deoxy-D-xylulose-5-phosphate (DXP) and 3-amino-2-oxopropyl phosphate (1-amino-acetone-3-phosphate or AAP) to form pyridoxine 5'-phosphate (PNP) and inorganic phosphate. This chain is Pyridoxine 5'-phosphate synthase, found in Photorhabdus laumondii subsp. laumondii (strain DSM 15139 / CIP 105565 / TT01) (Photorhabdus luminescens subsp. laumondii).